We begin with the raw amino-acid sequence, 70 residues long: MNLPVKIRRDWHYYAFAIGLIFILNGVVGLLGFEAKGWQTYAVGLVTWVISFWLAGLIIRRRDEETENAQ.

A run of 2 helical transmembrane segments spans residues 13–33 (YYAF…LLGF) and 39–59 (QTYA…GLII).

Its subcellular location is the cell membrane. This is an uncharacterized protein from Escherichia coli O6:H1 (strain CFT073 / ATCC 700928 / UPEC).